Here is a 273-residue protein sequence, read N- to C-terminus: Endochitinase EP3 (273 aa).

The N-terminal stretch at 1–28 (MLTPTISKSISLVTILLVLQAFSNTTKA) is a signal peptide. The N-linked (GlcNAc...) asparagine glycan is linked to Asn24. The Chitin-binding type-1 domain occupies 29–63 (QNCGCSSELCCSQFGFCGNTSDYCGVGCQQGPCFA). Cystine bridges form between Cys31-Cys39, Cys33-Cys45, Cys38-Cys52, and Cys56-Cys61. The N-linked (GlcNAc...) asparagine glycan is linked to Asn47. The catalytic stretch occupies residues 70–273 (VSVAEIVTQE…GVDPGNNLTC (204 aa)). The active-site Proton donor is the Glu136. N-linked (GlcNAc...) asparagine glycans are attached at residues Asn157 and Asn270.

Belongs to the glycosyl hydrolase 19 family. Chitinase class I subfamily. As to expression, expressed in cells surrounding embryos, stems, seedlings, pollen, roots, shoots, inflorescence, flowers, siliques and leaves. Present in seedpods and seed embryos, but not in roots, inflorescence stems, leaves and flowers.

The enzyme catalyses Random endo-hydrolysis of N-acetyl-beta-D-glucosaminide (1-&gt;4)-beta-linkages in chitin and chitodextrins.. Probably involved in hypersensitive reaction upon Xanthomonas campestris infection. In Arabidopsis thaliana (Mouse-ear cress), this protein is Endochitinase EP3.